The sequence spans 114 residues: Tyrosine-protein phosphatase 13 (114 aa).

In terms of domain architecture, Tyrosine-protein phosphatase spans 1–114; that stretch reads WRMLWEHNST…QFGQEGPITI (114 aa). Glu82 contributes to the substrate binding site.

It belongs to the protein-tyrosine phosphatase family.

It catalyses the reaction O-phospho-L-tyrosyl-[protein] + H2O = L-tyrosyl-[protein] + phosphate. This Styela plicata (Wrinkled sea squirt) protein is Tyrosine-protein phosphatase 13 (STY-13).